Reading from the N-terminus, the 428-residue chain is Dihydroorotase (428 aa).

Residues H59 and H61 each contribute to the Zn(2+) site. Residues 61–63 and N93 each bind substrate; that span reads HLR. Residues D151, H178, and H231 each coordinate Zn(2+). Position 277 (N277) interacts with substrate. D304 lines the Zn(2+) pocket. D304 is an active-site residue. Substrate-binding positions include H308 and 322–323; that span reads FG.

Belongs to the metallo-dependent hydrolases superfamily. DHOase family. Class I DHOase subfamily. The cofactor is Zn(2+).

The enzyme catalyses (S)-dihydroorotate + H2O = N-carbamoyl-L-aspartate + H(+). The protein operates within pyrimidine metabolism; UMP biosynthesis via de novo pathway; (S)-dihydroorotate from bicarbonate: step 3/3. Functionally, catalyzes the reversible cyclization of carbamoyl aspartate to dihydroorotate. The sequence is that of Dihydroorotase from Bacillus cytotoxicus (strain DSM 22905 / CIP 110041 / 391-98 / NVH 391-98).